A 389-amino-acid polypeptide reads, in one-letter code: Transcription factor MYB97 (389 aa).

HTH myb-type domains follow at residues 16-68 and 69-123; these read GVVL…ANHL and RPNL…KRFQ. 2 consecutive DNA-binding regions (H-T-H motif) follow at residues 44-68 and 96-119; these read WNSVQKKTWLARCGKSCRLRWANHL and WARMAAQLPGRTDNEIKNYWNTRL. The interval 131-159 is disordered; the sequence is PPEYSQNNHQQQMYPQQPSSPLPSQTPAS. Positions 140–159 are enriched in low complexity; that stretch reads QQQMYPQQPSSPLPSQTPAS.

In terms of tissue distribution, accumulates in pollen grains and pollen tube. Mostly expressed in mature pollen grains, and, to a lower extent, in inflorescences and siliques.

It is found in the nucleus. Its function is as follows. Transcription activator. Binds to 5'-CAACTGTC-3' and/or 5'-TAACAAA-3' motif in target gene promoter to promote their expression. Together with MYB101 and MYB120, functions as a male factor that controls pollen tube-synergid interaction in fertilization. Required for pollen tube growth arrest and sperm cell release in the female gametophyte, probably via the regulation of pollen tube-specific gene expression. This is Transcription factor MYB97 from Arabidopsis thaliana (Mouse-ear cress).